A 782-amino-acid polypeptide reads, in one-letter code: DNA repair and recombination protein RAD54-like (782 aa).

The span at 1 to 20 (MRRSLAPSQRGGQRLSSRND) shows a compositional bias: polar residues. A disordered region spans residues 1–28 (MRRSLAPSQRGGQRLSSRNDFTPPLLKK). The tract at residues 2–9 (RRSLAPSQ) is required for chromatin remodeling, strand pairing activities and coupling of ATPase activity. Thr-22 carries the phosphothreonine modification. Residues 168-343 (EGKRGNFNGC…FSLVNFVNPE (176 aa)) enclose the Helicase ATP-binding domain. 181 to 188 (DEMGLGKT) is a binding site for ATP. Residues 294-297 (DEGH) carry the DEGH box motif. In terms of domain architecture, Helicase C-terminal spans 501-658 (LLDFMLAAIR…NNESAEKHFT (158 aa)). Residues 741–753 (SQKIEATPATETS) show a composition bias toward polar residues. Residues 741-782 (SQKIEATPATETSVEAKLEPERRKRPAMPLSDDSADEDFQGF) are disordered. Residues 773-782 (DSADEDFQGF) are compositionally biased toward acidic residues.

The protein belongs to the SNF2/RAD54 helicase family. In terms of assembly, interacts (via N-terminus) with spn-A/Rad51.

It is found in the nucleus. Functionally, involved in mitotic DNA repair and meiotic recombination. Functions in the recombinational DNA repair pathway. Essential for interhomolog gene conversion (GC), but may have a less important role in intersister GC than spn-A/Rad51. In the presence of DNA, spn-A/Rad51 enhances the ATPase activity of okr/Rad54. This is DNA repair and recombination protein RAD54-like from Drosophila persimilis (Fruit fly).